A 132-amino-acid polypeptide reads, in one-letter code: Homeobox protein ceh-1 (132 aa).

Positions 1–60 (MRRARTAFTYEQLVALENKFKTSRYLSVVERLNLAIQLQLSETQVKIWFQNRRTKWKKHN) form a DNA-binding region, homeobox. Residues 56-80 (WKKHNPGQDANTPQTPPSSDETQIQ) are disordered. The span at 63–80 (QDANTPQTPPSSDETQIQ) shows a compositional bias: polar residues.

The protein localises to the nucleus. This chain is Homeobox protein ceh-1 (ceh-1), found in Caenorhabditis elegans.